The sequence spans 209 residues: GTP cyclohydrolase-2 (209 aa).

49–53 (RIHSE) is a binding site for GTP. Zn(2+) is bound by residues C54, C65, and C67. Residues Q70, 92–94 (EGR), and T114 contribute to the GTP site. The active-site Proton acceptor is D126. R128 (nucleophile) is an active-site residue. GTP contacts are provided by T149 and K154.

This sequence belongs to the GTP cyclohydrolase II family. It depends on Zn(2+) as a cofactor.

It catalyses the reaction GTP + 4 H2O = 2,5-diamino-6-hydroxy-4-(5-phosphoribosylamino)-pyrimidine + formate + 2 phosphate + 3 H(+). It functions in the pathway cofactor biosynthesis; riboflavin biosynthesis; 5-amino-6-(D-ribitylamino)uracil from GTP: step 1/4. Functionally, catalyzes the conversion of GTP to 2,5-diamino-6-ribosylamino-4(3H)-pyrimidinone 5'-phosphate (DARP), formate and pyrophosphate. This chain is GTP cyclohydrolase-2, found in Shewanella halifaxensis (strain HAW-EB4).